Here is a 453-residue protein sequence, read N- to C-terminus: MAAVAAARRMVNGAGPGGAREQAAALTRDFLSQPRLTYKTVSGVNGPLVITSCEFTGDILRTPVSEDMLGRVFNGSGKPIDRGPAVLAEDFLDIMGQPINPQCRIYPEEMIQTGISAIDGMNSIARGQKIPIFSAAGLPHNEIAAQICRQAGLVKKSKDVMDYSEENFAIVFAAMGVNMETARFFKSDFEENGSMDNVCLFLNLANDPTIERIITPRLALTTAEFLAYQCEKHVLVILTDMSSYAEALREVSAAREEVPGRRGFPGYMYTDLATIYERAGRVEGRNGSITQIPILTMPNDDITHPIPDLTGYITEGQIYVDRQLHNRQIYPPINVLPSLSRLMKSAIGEGMTRKDHADVSNQLYACYAIGKDVQAMKAVVGEEALTSDDLLYLEFLQKFEKNFIAQGPYENRTVYETLDIGWQLLRIFPKEMLKRIPQTTLAEFYPRDSTAKH.

Residue Arg341 coordinates ATP.

Belongs to the ATPase alpha/beta chains family. V-ATPase is a heteromultimeric enzyme made up of two complexes: the ATP-hydrolytic V1 complex and the proton translocation V0 complex. The V1 complex consists of three catalytic AB heterodimers that form a heterohexamer, three peripheral stalks each consisting of EG heterodimers, one central rotor including subunits D and F, and the regulatory subunits C and H. The proton translocation complex V0 consists of the proton transport subunit a, a ring of proteolipid subunits c9c'', rotary subunit d, subunits e and f, and two accessory subunits.

Functionally, non-catalytic subunit of the V1 complex of vacuolar(H+)-ATPase (V-ATPase), a multisubunit enzyme composed of a peripheral complex (V1) that hydrolyzes ATP and a membrane integral complex (V0) that translocates protons. V-ATPase is responsible for acidifying and maintaining the pH of intracellular compartments and in some cell types, is targeted to the plasma membrane, where it is responsible for acidifying the extracellular environment. Essential for the proper assembly and activity of V-ATPase. The protein is V-type proton ATPase subunit B (ATP6V1B) of Gallus gallus (Chicken).